The following is a 271-amino-acid chain: MTYLQESSRPAVTVPKLQAMRDAGEKIAMLTCYDASFSALLDRSGVDVLLIGDSLGNVLQGHTTTLPVSLDDIAYHTACVARAQPRALIMADLPFGTYGTPAEAFASSVKLMRAGAQMVKLEGGEWLAETIRFLVERAVPVCAHVGLTPQSVHAFGGFKVQGKTEAGAAQLLRDARAVEAAGAQVVLLEAVPTLIGSEVTHMLRVPTIGIGAGADCSGQVLVLHDMLGVFPGKRPRFVKDFMQGEPNIQAAVEAYVRAVKDGSFPGPEHSF.

Residues Asp53 and Asp92 each contribute to the Mg(2+) site. 3-methyl-2-oxobutanoate-binding positions include 53 to 54 (DS), Asp92, and Lys120. Glu122 is a Mg(2+) binding site. Glu189 serves as the catalytic Proton acceptor.

The protein belongs to the PanB family. As to quaternary structure, homodecamer; pentamer of dimers. It depends on Mg(2+) as a cofactor.

Its subcellular location is the cytoplasm. The enzyme catalyses 3-methyl-2-oxobutanoate + (6R)-5,10-methylene-5,6,7,8-tetrahydrofolate + H2O = 2-dehydropantoate + (6S)-5,6,7,8-tetrahydrofolate. The protein operates within cofactor biosynthesis; (R)-pantothenate biosynthesis; (R)-pantoate from 3-methyl-2-oxobutanoate: step 1/2. In terms of biological role, catalyzes the reversible reaction in which hydroxymethyl group from 5,10-methylenetetrahydrofolate is transferred onto alpha-ketoisovalerate to form ketopantoate. The chain is 3-methyl-2-oxobutanoate hydroxymethyltransferase 2 from Burkholderia lata (strain ATCC 17760 / DSM 23089 / LMG 22485 / NCIMB 9086 / R18194 / 383).